Consider the following 638-residue polypeptide: Poly(A)-specific ribonuclease PARN (638 aa).

The a divalent metal cation site is built by Asp28 and Glu30. The segment at 143-165 (REQYDEKRSQSNGAGALSYTSPN) is disordered. The span at 152–165 (QSNGAGALSYTSPN) shows a compositional bias: polar residues. Ser163 and Ser167 each carry phosphoserine. Positions 178-245 (KKFIDQVVEK…ERYIVISKVD (68 aa)) constitute an R3H domain. An N6-acetyllysine modification is found at Lys220. A divalent metal cation is bound by residues Asp292 and Asp382. Position 499 is an N6-acetyllysine (Lys499). Residue Ser530 is modified to Phosphoserine. The residue at position 557 (Ser557) is a Phosphoserine; by MAPKAPK2. A disordered region spans residues 573–638 (RAEAGLEARA…AKLFEVPDTW (66 aa)). Phosphoserine is present on residues Ser583 and Ser587. Residues 606–615 (KKAKKLKRMK) show a composition bias toward basic residues. A phosphoserine mark is found at Ser619, Ser623, and Ser627.

Belongs to the CAF1 family. As to quaternary structure, homodimer. Found in a mRNA decay complex with RENT1, RENT2 and RENT3B. Interacts with KHSRP. Interacts with CELF1/CUGBP1. Interacts with ZC3HAV1 in an RNA-independent manner. Interacts with DHX36. The cofactor is Mg(2+). Post-translationally, phosphorylation by MAPKAPK2, preventing GADD45A mRNA degradation after genotoxic stress.

It localises to the nucleus. Its subcellular location is the cytoplasm. The protein localises to the nucleolus. It carries out the reaction Exonucleolytic cleavage of poly(A) to 5'-AMP.. Functionally, 3'-exoribonuclease that has a preference for poly(A) tails of mRNAs, thereby efficiently degrading poly(A) tails. Exonucleolytic degradation of the poly(A) tail is often the first step in the decay of eukaryotic mRNAs and is also used to silence certain maternal mRNAs translationally during oocyte maturation and early embryonic development. Involved in nonsense-mediated mRNA decay, a critical process of selective degradation of mRNAs that contain premature stop codons. Also involved in degradation of inherently unstable mRNAs that contain AU-rich elements (AREs) in their 3'-UTR, possibly via its interaction with KHSRP. Probably mediates the removal of poly(A) tails of AREs mRNAs, which constitutes the first step of destabilization. Interacts with both the 3'-end poly(A) tail and the 5'-end cap structure during degradation, the interaction with the cap structure being required for an efficient degradation of poly(A) tails. Also able to recognize poly(A) tails of microRNAs such as MIR21 and H/ACA box snoRNAs (small nucleolar RNAs) leading to microRNAs degradation or snoRNA increased stability. The polypeptide is Poly(A)-specific ribonuclease PARN (PARN) (Bos taurus (Bovine)).